A 755-amino-acid polypeptide reads, in one-letter code: Cellulose synthase-like protein B3 (755 aa).

The next 2 membrane-spanning stretches (helical) occupy residues V24–M44 and W51–I71. Residues D136 and D461 contribute to the active site. 6 consecutive transmembrane segments (helical) span residues Y534–Y556, V569–F589, L615–V635, F674–G694, G702–L722, and I733–V753.

The protein belongs to the glycosyltransferase 2 family. Plant cellulose synthase-like B subfamily. Expressed in young seedlings, primarily in the vascular tissue.

It localises to the golgi apparatus membrane. Its function is as follows. Thought to be a Golgi-localized beta-glycan synthase that polymerize the backbones of noncellulosic polysaccharides (hemicelluloses) of plant cell wall. This chain is Cellulose synthase-like protein B3 (CSLB3), found in Arabidopsis thaliana (Mouse-ear cress).